We begin with the raw amino-acid sequence, 475 residues long: Aspartyl/glutamyl-tRNA(Asn/Gln) amidotransferase subunit B (475 aa).

The protein belongs to the GatB/GatE family. GatB subfamily. As to quaternary structure, heterotrimer of A, B and C subunits.

It carries out the reaction L-glutamyl-tRNA(Gln) + L-glutamine + ATP + H2O = L-glutaminyl-tRNA(Gln) + L-glutamate + ADP + phosphate + H(+). The enzyme catalyses L-aspartyl-tRNA(Asn) + L-glutamine + ATP + H2O = L-asparaginyl-tRNA(Asn) + L-glutamate + ADP + phosphate + 2 H(+). Allows the formation of correctly charged Asn-tRNA(Asn) or Gln-tRNA(Gln) through the transamidation of misacylated Asp-tRNA(Asn) or Glu-tRNA(Gln) in organisms which lack either or both of asparaginyl-tRNA or glutaminyl-tRNA synthetases. The reaction takes place in the presence of glutamine and ATP through an activated phospho-Asp-tRNA(Asn) or phospho-Glu-tRNA(Gln). The sequence is that of Aspartyl/glutamyl-tRNA(Asn/Gln) amidotransferase subunit B from Bacillus mycoides (strain KBAB4) (Bacillus weihenstephanensis).